The primary structure comprises 620 residues: Zinc metalloproteinase-disintegrin-like ACLD (620 aa).

Residues 1–20 form the signal peptide; it reads MIQVLLVTLCLAVFPYQGSS. Positions 21–189 are excised as a propeptide; sequence IILESGNVND…KKASQLNLTP (169 aa). Residues 199-395 form the Peptidase M12B domain; the sequence is KYVEFVVVLD…RRPKCILNEP (197 aa). E202 is a binding site for Ca(2+). N259 and N265 each carry an N-linked (GlcNAc...) asparagine glycan. D286 is a binding site for Ca(2+). Cystine bridges form between C310/C390, C350/C374, and C352/C357. Residue H335 coordinates Zn(2+). E336 is an active-site residue. Zn(2+) contacts are provided by H339 and H345. A glycan (N-linked (GlcNAc...) asparagine) is linked at N373. Ca(2+) contacts are provided by C390 and N393. N396 is a glycosylation site (N-linked (GlcNAc...) asparagine). One can recognise a Disintegrin domain in the interval 403-489; the sequence is PPVCGNELLE…ECPTDRFQRN (87 aa). Residues V405, N408, L410, E412, E415, and D418 each contribute to the Ca(2+) site. Cystine bridges form between C406-C435, C417-C430, C419-C425, C429-C452, C443-C449, C448-C474, C461-C481, C468-C500, C493-C505, C512-C562, C527-C573, C540-C550, C557-C599, and C593-C604. Residues 467–469 carry the D/ECD-tripeptide motif; it reads DCD. N-linked (GlcNAc...) asparagine glycosylation is found at N502 and N536.

This sequence belongs to the venom metalloproteinase (M12B) family. P-III subfamily. P-IIIa sub-subfamily. Monomer. Zn(2+) serves as cofactor. As to expression, expressed by the venom gland.

It localises to the secreted. Inhibited by EDTA and O-phenanthroline. Not inhibited by PMSF, benzamidine, irreversible serine-proteinase inhibitors and cysteine proteinase inhibitor E-64. In terms of biological role, is a potent activator of prothrombin (F2). Does not elicit any hemorrhagic response. Barely inhibits collagen-induced platelet aggregation. Binds neither collagen, nor the jararhagin-monoclonal antibody MAJar3. Hydrolyzes the Aalpha-chain of fibrin and fibrinogen, without affecting the Bbeta- and gamma-chains. Is capable of triggering endothelial pro-inflammatory and procoagulant cell responses, but fails to trigger apoptosis. Induces von Willebrand factor release, and the expression of both ICAM1 and E-selectin (SELE) (without increase in VCAM1) in endothelial cells (HUVEC). Is also able to up-regulate the synthesis of the coagulation factor TF (F3). Enhances nitric oxide (NO) generation, prostacyclin production and interleukin-8 release. This chain is Zinc metalloproteinase-disintegrin-like ACLD, found in Agkistrodon contortrix laticinctus (Broad-banded copperhead).